The sequence spans 119 residues: Ribonuclease P protein component (119 aa).

Belongs to the RnpA family. Consists of a catalytic RNA component (M1 or rnpB) and a protein subunit.

The enzyme catalyses Endonucleolytic cleavage of RNA, removing 5'-extranucleotides from tRNA precursor.. In terms of biological role, RNaseP catalyzes the removal of the 5'-leader sequence from pre-tRNA to produce the mature 5'-terminus. It can also cleave other RNA substrates such as 4.5S RNA. The protein component plays an auxiliary but essential role in vivo by binding to the 5'-leader sequence and broadening the substrate specificity of the ribozyme. The chain is Ribonuclease P protein component from Streptococcus pyogenes serotype M5 (strain Manfredo).